The primary structure comprises 245 residues: Carbohydrate deacetylase (245 aa).

Mg(2+) is bound by residues His59 and His121.

The protein belongs to the YdjC deacetylase family. As to quaternary structure, homodimer. The cofactor is Mg(2+).

Probably catalyzes the deacetylation of acetylated carbohydrates an important step in the degradation of oligosaccharides. The polypeptide is Carbohydrate deacetylase (Clostridium beijerinckii (strain ATCC 51743 / NCIMB 8052) (Clostridium acetobutylicum)).